The primary structure comprises 435 residues: Ribulose bisphosphate carboxylase large chain (435 aa).

Position 5 is an N6,N6,N6-trimethyllysine (Lys-5). Asn-114 and Thr-164 together coordinate substrate. Lys-166 functions as the Proton acceptor in the catalytic mechanism. Lys-168 is a substrate binding site. Residues Lys-192, Asp-194, and Glu-195 each coordinate Mg(2+). Lys-192 bears the N6-carboxylysine mark. The Proton acceptor role is filled by His-285. Positions 286, 318, and 370 each coordinate substrate.

Belongs to the RuBisCO large chain family. Type I subfamily. In terms of assembly, heterohexadecamer of 8 large chains and 8 small chains; disulfide-linked. The disulfide link is formed within the large subunit homodimers. Mg(2+) serves as cofactor. The disulfide bond which can form in the large chain dimeric partners within the hexadecamer appears to be associated with oxidative stress and protein turnover.

Its subcellular location is the plastid. It localises to the chloroplast. The enzyme catalyses 2 (2R)-3-phosphoglycerate + 2 H(+) = D-ribulose 1,5-bisphosphate + CO2 + H2O. It catalyses the reaction D-ribulose 1,5-bisphosphate + O2 = 2-phosphoglycolate + (2R)-3-phosphoglycerate + 2 H(+). Functionally, ruBisCO catalyzes two reactions: the carboxylation of D-ribulose 1,5-bisphosphate, the primary event in carbon dioxide fixation, as well as the oxidative fragmentation of the pentose substrate in the photorespiration process. Both reactions occur simultaneously and in competition at the same active site. The protein is Ribulose bisphosphate carboxylase large chain of Drosera burmannii (Burmese sundew).